Reading from the N-terminus, the 36-residue chain is Pancreatic polypeptide (36 aa).

Position 36 is a tyrosine amide (tyrosine 36).

It belongs to the NPY family.

It localises to the secreted. In terms of biological role, hormone secreted by pancreatic cells that acts as a regulator of pancreatic and gastrointestinal functions probably by signaling through the G protein-coupled receptor NPY4R2. The chain is Pancreatic polypeptide (PPY) from Didelphis virginiana (North American opossum).